We begin with the raw amino-acid sequence, 298 residues long: Fluorinase (298 aa).

Residues D14, 19-21 (DDS), Y75, S156, D209, N214, 268-269 (SR), and 276-278 (RNA) contribute to the S-adenosyl-L-methionine site.

Belongs to the SAM hydrolase / SAM-dependent halogenase family.

The enzyme catalyses fluoride + S-adenosyl-L-methionine = 5'-deoxy-5'-fluoroadenosine + L-methionine. Catalyzes the formation of a C-F bond by combining S-adenosyl-L-methionine (SAM) and fluoride to generate 5'-fluoro-5'-deoxyadenosine (5'-FDA) and L-methionine. This is Fluorinase from Actinoplanes sp. (strain N902-109).